A 209-amino-acid polypeptide reads, in one-letter code: Outer-membrane lipoprotein carrier protein (209 aa).

An N-terminal signal peptide occupies residues 1-22 (MKKLLLTLAMVPAVLFSPTAWG).

The protein belongs to the LolA family. Monomer.

It is found in the periplasm. Its function is as follows. Participates in the translocation of lipoproteins from the inner membrane to the outer membrane. Only forms a complex with a lipoprotein if the residue after the N-terminal Cys is not an aspartate (The Asp acts as a targeting signal to indicate that the lipoprotein should stay in the inner membrane). The polypeptide is Outer-membrane lipoprotein carrier protein (Alcanivorax borkumensis (strain ATCC 700651 / DSM 11573 / NCIMB 13689 / SK2)).